The following is a 478-amino-acid chain: Pyruvate kinase (478 aa).

R35 is a substrate binding site. K(+) is bound by residues N37, S39, and D69. 37-40 provides a ligand contact to ATP; the sequence is NMSH. ATP contacts are provided by R76 and K157. Residue E219 coordinates Mg(2+). G242, D243, and T275 together coordinate substrate. Residue D243 coordinates Mg(2+).

This sequence belongs to the pyruvate kinase family. In terms of assembly, homotetramer. Mg(2+) serves as cofactor. Requires K(+) as cofactor.

The enzyme catalyses pyruvate + ATP = phosphoenolpyruvate + ADP + H(+). It functions in the pathway carbohydrate degradation; glycolysis; pyruvate from D-glyceraldehyde 3-phosphate: step 5/5. The polypeptide is Pyruvate kinase (pyk) (Methylorubrum extorquens (strain ATCC 14718 / DSM 1338 / JCM 2805 / NCIMB 9133 / AM1) (Methylobacterium extorquens)).